The sequence spans 379 residues: Glucose-1-phosphate adenylyltransferase (379 aa).

Alpha-D-glucose 1-phosphate contacts are provided by residues glycine 164, 179-180, and serine 190; that span reads EK.

It belongs to the bacterial/plant glucose-1-phosphate adenylyltransferase family. Homotetramer.

The catalysed reaction is alpha-D-glucose 1-phosphate + ATP + H(+) = ADP-alpha-D-glucose + diphosphate. It functions in the pathway glycan biosynthesis; glycogen biosynthesis. Functionally, involved in the biosynthesis of ADP-glucose, a building block required for the elongation reactions to produce glycogen. Catalyzes the reaction between ATP and alpha-D-glucose 1-phosphate (G1P) to produce pyrophosphate and ADP-Glc. The protein is Glucose-1-phosphate adenylyltransferase of Streptococcus agalactiae serotype III (strain NEM316).